Here is a 350-residue protein sequence, read N- to C-terminus: DNA polymerase IV (350 aa).

Positions 5-181 (IMHYDMDAFY…KKIKIIPGVG (177 aa)) constitute a UmuC domain. Residues D9 and D99 each coordinate Mg(2+). Residue E100 is part of the active site.

Belongs to the DNA polymerase type-Y family. As to quaternary structure, monomer. It depends on Mg(2+) as a cofactor.

Its subcellular location is the cytoplasm. It catalyses the reaction DNA(n) + a 2'-deoxyribonucleoside 5'-triphosphate = DNA(n+1) + diphosphate. In terms of biological role, poorly processive, error-prone DNA polymerase involved in untargeted mutagenesis. Copies undamaged DNA at stalled replication forks, which arise in vivo from mismatched or misaligned primer ends. These misaligned primers can be extended by PolIV. Exhibits no 3'-5' exonuclease (proofreading) activity. May be involved in translesional synthesis, in conjunction with the beta clamp from PolIII. This chain is DNA polymerase IV, found in Fusobacterium nucleatum subsp. nucleatum (strain ATCC 25586 / DSM 15643 / BCRC 10681 / CIP 101130 / JCM 8532 / KCTC 2640 / LMG 13131 / VPI 4355).